Reading from the N-terminus, the 179-residue chain is Transcriptional regulator ICP22 homolog (179 aa).

A compositionally biased stretch (basic and acidic residues) spans 1 to 12 (MSRDRDRARPDT). The disordered stretch occupies residues 1–40 (MSRDRDRARPDTRLSSSDNESDDEDYQLPHSHPEYGSDSS).

It belongs to the herpesviridae ICP22 family.

The sequence is that of Transcriptional regulator ICP22 homolog (MDV088) from Gallid herpesvirus 2 (strain Chicken/Md5/ATCC VR-987) (GaHV-2).